A 283-amino-acid chain; its full sequence is 2-heptyl-4(1H)-quinolone synthase subunit PqsB (283 aa).

The protein belongs to the thiolase-like superfamily. FabH family. As to quaternary structure, forms a tight complex with PqsC.

It localises to the cytoplasm. With respect to regulation, activity of the complex is inhibited by 2-aminoacetophenone (2-AA). Functionally, required for the biosynthesis of the quorum-sensing signaling molecules 2-heptyl-4(1H)-quinolone (HHQ) and 2-heptyl-3-hydroxy-4(1H)-quinolone (Pseudomonas quinolone signal or PQS), which are important for biofilm formation and virulence. The PqsC/PqsB complex catalyzes the condensation of 2-aminobenzoylacetate (2-ABA) and octanoyl-CoA to form HHQ. PqsB, together with PqsC, catalyzes the coupling of 2-ABA with the octanoate group, leading to decarboxylation and dehydration, and resulting in closure of the quinoline ring. PqsB is probably required for the proper folding of PqsC rather than for a direct enzymatic role in the process. In Pseudomonas aeruginosa (strain ATCC 15692 / DSM 22644 / CIP 104116 / JCM 14847 / LMG 12228 / 1C / PRS 101 / PAO1), this protein is 2-heptyl-4(1H)-quinolone synthase subunit PqsB.